The chain runs to 267 residues: Acyl-[acyl-carrier-protein]--UDP-N-acetylglucosamine O-acyltransferase (267 aa).

It belongs to the transferase hexapeptide repeat family. LpxA subfamily. As to quaternary structure, homotrimer.

The protein localises to the cytoplasm. The enzyme catalyses a (3R)-hydroxyacyl-[ACP] + UDP-N-acetyl-alpha-D-glucosamine = a UDP-3-O-[(3R)-3-hydroxyacyl]-N-acetyl-alpha-D-glucosamine + holo-[ACP]. It functions in the pathway glycolipid biosynthesis; lipid IV(A) biosynthesis; lipid IV(A) from (3R)-3-hydroxytetradecanoyl-[acyl-carrier-protein] and UDP-N-acetyl-alpha-D-glucosamine: step 1/6. Involved in the biosynthesis of lipid A, a phosphorylated glycolipid that anchors the lipopolysaccharide to the outer membrane of the cell. This chain is Acyl-[acyl-carrier-protein]--UDP-N-acetylglucosamine O-acyltransferase, found in Proteus mirabilis (strain HI4320).